A 728-amino-acid chain; its full sequence is Magnetosome formation protease MamE (728 aa).

The Cytoplasmic segment spans residues M1–D21. A helical transmembrane segment spans residues L22 to I42. Residues Y43–L728 are Lumenal-facing. Active-site charge relay system residues include H188, D221, and S297. The short motif at I375–L398 is the MCR (magnetochrome) 1 element. Positions 392, 395, 396, 438, 441, and 442 each coordinate heme. The MCR 2 motif lies at I421–M444. 2 consecutive PDZ domains span residues A471–G573 and P622–G721.

The protein in the N-terminal section; belongs to the peptidase S1C family. In terms of assembly, might interact with MamB via PDZ1. Heme serves as cofactor. Post-translationally, subject to autocatalytic cleavage; cleavage also requires MamO.

The protein resides in the magnetosome membrane. Autoproteolysis is stimulated by exogenous substrates or peptides that bind to its PDZ domains; may be stimulated by an environmental cue in vivo. Protease activity is tightly regulated; increasing its activity decreases substrate levels and disturbs biomineralization. Functionally, acts at 2 distinct steps of magnetosome formation; required for correct localization of proteins to the magnetosome while the protease activity is required for maturation of small magnetite crystals into larger, functional ones. The 2 functions are separable by mutation. Probably cleaves at least itself, MamO and MamP; cleavage requires the putative transport domain of MamO. Involved in localization of some proteins (at least MamA, MamC, MamF, MamI and MamJ) to the magnetosome. This Paramagnetospirillum magneticum (strain ATCC 700264 / AMB-1) (Magnetospirillum magneticum) protein is Magnetosome formation protease MamE (mamE).